The sequence spans 335 residues: Dye-decolorizing peroxidase (335 aa).

The Proton acceptor role is filled by Asp-149. His-222 is a binding site for heme. Residues 312 to 335 (LPQAATPTLAAGSLSIGSLKGSPR) form a targeting peptide region.

Belongs to the DyP-type peroxidase family. In terms of assembly, homotetramer, presumably also in the encapsulin nanocompartment. Requires heme b as cofactor.

It localises to the encapsulin nanocompartment. The catalysed reaction is 2 a phenolic donor + H2O2 = 2 a phenolic radical donor + 2 H2O. Cargo of a type 1 encapsulin nanocompartment in situ; this cargo protects against oxidative stress at low pH. When expressed in the cytoplasm (absence of the encapsulin shell gene) it is almost as protective as the intact nanocompartment; its encapsulation has a modest yet significant effect on protection against oxidative stress at low pH. A heme-dependent peroxidase, it probably does not have deferrochelatase activity. Converts guaiacol and H2O2 to tetraguaiacol, also acts on 2,2'-azino-bis(3-ethylbenzothiazoline-6-sulfonic acid) (ABTS). Retains peroxidase activity when encapsulated but has a reduced set of substrates; acts on ABTS but not guaiacol. In Mycobacterium tuberculosis (strain ATCC 25618 / H37Rv), this protein is Dye-decolorizing peroxidase.